A 200-amino-acid polypeptide reads, in one-letter code: Coiled-coil domain-containing protein 28B (200 aa).

The residue at position 1 (Met1) is an N-acetylmethionine. Basic residues predominate over residues 1 to 10; the sequence is MEDKKKKRSP. Positions 1–49 are disordered; the sequence is MEDKKKKRSPKPCLTQPAQAPGTLRRVPVPTSHSGSLALGLPHLPSPKQ. A phosphoserine mark is found at Ser46 and Ser115. The segment covering 140–152 has biased composition (acidic residues); it reads GEEEDEEEEEDGV. Positions 140–165 are disordered; sequence GEEEDEEEEEDGVTEGLPEEQKKTMA. Positions 158 to 189 form a coiled coil; the sequence is EEQKKTMADRNLDQLLSNLEDLSNSIQKLHLA.

In terms of assembly, interacts with BBS1, BBS2, BBS4, BBS5, BBS6, BBS7 and TTC8/BBS8. Interacts with MAPKAP1/SIN1 isoform 1 and RICTOR. In terms of tissue distribution, expressed in the retina, pericardium and limb epithelium.

The protein resides in the cytoplasm. It localises to the cytoskeleton. Its subcellular location is the microtubule organizing center. The protein localises to the centrosome. Involved in ciliogenesis. Regulates cilia length through its interaction with MAPKAP1/SIN1 but independently of mTORC2 complex. Modulates mTORC2 complex assembly and function, possibly enhances AKT1 phosphorylation. Does not seem to modulate assembly and function of mTORC1 complex. The polypeptide is Coiled-coil domain-containing protein 28B (Ccdc28b) (Mus musculus (Mouse)).